The chain runs to 130 residues: Glycine cleavage system H protein (130 aa).

In terms of domain architecture, Lipoyl-binding spans 24–106 (EYTVGITEHA…YHEGWLFRIK (83 aa)). The residue at position 65 (Lys65) is an N6-lipoyllysine.

Belongs to the GcvH family. As to quaternary structure, the glycine cleavage system is composed of four proteins: P, T, L and H. (R)-lipoate serves as cofactor.

The glycine cleavage system catalyzes the degradation of glycine. The H protein shuttles the methylamine group of glycine from the P protein to the T protein. The polypeptide is Glycine cleavage system H protein (Photorhabdus laumondii subsp. laumondii (strain DSM 15139 / CIP 105565 / TT01) (Photorhabdus luminescens subsp. laumondii)).